The primary structure comprises 170 residues: Shikimate kinase (170 aa).

11–16 (LSGKST) is a binding site for ATP. S15 contributes to the Mg(2+) binding site. D33, R57, and G79 together coordinate substrate. Residue R119 coordinates ATP. R137 lines the substrate pocket.

It belongs to the shikimate kinase family. Monomer. Mg(2+) serves as cofactor.

The protein resides in the cytoplasm. It catalyses the reaction shikimate + ATP = 3-phosphoshikimate + ADP + H(+). The protein operates within metabolic intermediate biosynthesis; chorismate biosynthesis; chorismate from D-erythrose 4-phosphate and phosphoenolpyruvate: step 5/7. In terms of biological role, catalyzes the specific phosphorylation of the 3-hydroxyl group of shikimic acid using ATP as a cosubstrate. The chain is Shikimate kinase from Clostridium botulinum (strain 657 / Type Ba4).